A 136-amino-acid polypeptide reads, in one-letter code: MAALRYRRFLKLCEEWPVDETKRGRDLGAYLRQRVAQAFREGENTQIAEPEACDQMYESLARLHSNYYKHKYPRPRDTSFSGLSVEEYKLILSTDTLEEFQEMNKSMWKKLQEKFAPTRPEEKHKAWTRVLSRPRT.

A mitochondrion-targeting transit peptide spans 1–13 (MAALRYRRFLKLC).

As to quaternary structure, interacts with UQCC1. Forms a complex, named COMB/coordinator of mitochondrial CYTB biogenesis, composed of UQCC1, UQCC2, UQCC4, UQCC5 and UQCC6; stabilizes nascent cytochrome b/MT-CYB and promotes its membrane insertion. Forms a complex, named COMA, composed of UQCC1, UQCC2 and UQCC4; activates MT-CYB translation. Forms a complex, named COMC, composed of UQCC1, UQCC2; UQCC3 and UQCC4; mediates MT-CYB hemylation and association with the first nuclear-encoded CIII subunit UQCRQ. In terms of tissue distribution, widely expressed with highest levels in brain, liver, kidney, heart, skeletal muscle, thymus, testis and pancreas (at protein level).

Its subcellular location is the mitochondrion matrix. The protein localises to the mitochondrion nucleoid. It is found in the mitochondrion. The protein resides in the mitochondrion intermembrane space. It localises to the mitochondrion inner membrane. In terms of biological role, required for the assembly of the ubiquinol-cytochrome c reductase complex (mitochondrial respiratory chain complex III or cytochrome b-c1 complex). Plays a role in the modulation of respiratory chain activities such as oxygen consumption and ATP production and via its modulation of the respiratory chain activity can regulate skeletal muscle differentiation and insulin secretion by pancreatic beta-cells. Involved in cytochrome b translation and/or stability. This is Ubiquinol-cytochrome c reductase complex assembly factor 2 (Uqcc2) from Mus musculus (Mouse).